The primary structure comprises 266 residues: Transcription regulator FGM4 (266 aa).

The segment at 17-36 (KTQNRLAKRKSRIHAGKQQG) is disordered. The segment covering 18–31 (TQNRLAKRKSRIHA) has biased composition (basic residues). 2 ANK repeats span residues 183–212 (KPGS…NVNE) and 216–245 (AGYS…DWSY).

It is found in the nucleus. Its function is as follows. Transcription regulator; part of the Fg3_54/C64 gene cluster that mediates the biosynthesis of the octapeptide fusaoctaxin A, a virulence factor that is required for cell-to-cell invasiveness of plant host. Positively regulates the expression the Fg3_54/C64 gene cluster. The polypeptide is Transcription regulator FGM4 (Gibberella zeae (strain ATCC MYA-4620 / CBS 123657 / FGSC 9075 / NRRL 31084 / PH-1) (Wheat head blight fungus)).